A 682-amino-acid chain; its full sequence is MSEPRKILVTSALPYANGPVHLGHMLEYIQTDMWVRFQKHRGNQCIYVCADDAHGSAIMLRAEKEGITPEQLIDNVKAEHSADFADFLVDFDNFHSTHSDENRELSSMIYTRLRDAGHIATRSVTQYFDPEKKMFLADRFIKGTCPKCAAVDQYGDNCEKCGATYAPTDLKDPKSAISGATPVLKDSKHFFFDLPAFDTMLKSWTRSGTLQDAVANKIAEWLDSGLQQWDISRDAPYFGFEIPDEPGKYFYVWLDAPIGYMASFKNLCARRPDLDFDAYWGKDATTELYHFIGKDIVNFHALFWPAMLEGADLRKPTGVNVHGYLTVNGQKMSKSRGTFIKARTYLDHLPPEYLRYYYASKLGRGVDDLDLNLEDFVQKVNSDLIGKVVNIASRCAGFIHKGNAGVMVDANAAPELTDAFLAAAPSIADAYEARDFARAMRETMALADRANAYIAEKAPWALAKQEGKQDEVQAVCALGVNLFRQLVIFLKPVLPNLAADAEKFLNVAPLTWDDHKTLLTHHQLNPFSALMTRIDPLKVEAMAAASKEDLTATDTSTDAAPAGNGELAKDPLSAEIDFDAFAAVDLRVALILKAEHVEGADKLLRLTLDIGDEQRNVFSGIKSAYPDPSKLEGRLTMMIANLKPRKMRFGISEGMVMAAGPGGEEIYLLSPDSGAKPGQRIK.

A 'HIGH' region motif is present at residues 14–24 (PYANGPVHLGH). Cys-145, Cys-148, Cys-158, and Cys-161 together coordinate Zn(2+). The 'KMSKS' region motif lies at 331 to 335 (KMSKS). Lys-334 contributes to the ATP binding site. The region spanning 580-682 (AFAAVDLRVA…SGAKPGQRIK (103 aa)) is the tRNA-binding domain.

Belongs to the class-I aminoacyl-tRNA synthetase family. MetG type 1 subfamily. Homodimer. Zn(2+) serves as cofactor.

It localises to the cytoplasm. The enzyme catalyses tRNA(Met) + L-methionine + ATP = L-methionyl-tRNA(Met) + AMP + diphosphate. In terms of biological role, is required not only for elongation of protein synthesis but also for the initiation of all mRNA translation through initiator tRNA(fMet) aminoacylation. This chain is Methionine--tRNA ligase, found in Pseudomonas syringae pv. tomato (strain ATCC BAA-871 / DC3000).